The primary structure comprises 267 residues: Translation initiation factor 2 subunit alpha (267 aa).

In terms of domain architecture, S1 motif spans 12 to 83; the sequence is GEIVMATVER…KRKYANLSLR (72 aa).

This sequence belongs to the eIF-2-alpha family. In terms of assembly, heterotrimer composed of an alpha, a beta and a gamma chain.

EIF-2 functions in the early steps of protein synthesis by forming a ternary complex with GTP and initiator tRNA. This Methanopyrus kandleri (strain AV19 / DSM 6324 / JCM 9639 / NBRC 100938) protein is Translation initiation factor 2 subunit alpha.